A 210-amino-acid chain; its full sequence is Thiamine-phosphate synthase (210 aa).

4-amino-2-methyl-5-(diphosphooxymethyl)pyrimidine-binding positions include 36–40 (QLREK) and N68. D69 and D88 together coordinate Mg(2+). 4-amino-2-methyl-5-(diphosphooxymethyl)pyrimidine is bound at residue S107. 133-135 (TGS) contacts 2-[(2R,5Z)-2-carboxy-4-methylthiazol-5(2H)-ylidene]ethyl phosphate. Residue K136 coordinates 4-amino-2-methyl-5-(diphosphooxymethyl)pyrimidine. 2-[(2R,5Z)-2-carboxy-4-methylthiazol-5(2H)-ylidene]ethyl phosphate is bound by residues G164 and 184–185 (IS).

Belongs to the thiamine-phosphate synthase family. Mg(2+) is required as a cofactor.

The enzyme catalyses 2-[(2R,5Z)-2-carboxy-4-methylthiazol-5(2H)-ylidene]ethyl phosphate + 4-amino-2-methyl-5-(diphosphooxymethyl)pyrimidine + 2 H(+) = thiamine phosphate + CO2 + diphosphate. It catalyses the reaction 2-(2-carboxy-4-methylthiazol-5-yl)ethyl phosphate + 4-amino-2-methyl-5-(diphosphooxymethyl)pyrimidine + 2 H(+) = thiamine phosphate + CO2 + diphosphate. It carries out the reaction 4-methyl-5-(2-phosphooxyethyl)-thiazole + 4-amino-2-methyl-5-(diphosphooxymethyl)pyrimidine + H(+) = thiamine phosphate + diphosphate. It participates in cofactor biosynthesis; thiamine diphosphate biosynthesis; thiamine phosphate from 4-amino-2-methyl-5-diphosphomethylpyrimidine and 4-methyl-5-(2-phosphoethyl)-thiazole: step 1/1. In terms of biological role, condenses 4-methyl-5-(beta-hydroxyethyl)thiazole monophosphate (THZ-P) and 2-methyl-4-amino-5-hydroxymethyl pyrimidine pyrophosphate (HMP-PP) to form thiamine monophosphate (TMP). In Moorella thermoacetica (strain ATCC 39073 / JCM 9320), this protein is Thiamine-phosphate synthase.